We begin with the raw amino-acid sequence, 477 residues long: Methylenetetrahydrofolate--tRNA-(uracil-5-)-methyltransferase TrmFO (477 aa).

15–20 (GAGLAG) contributes to the FAD binding site.

It belongs to the MnmG family. TrmFO subfamily. FAD is required as a cofactor.

It localises to the cytoplasm. The catalysed reaction is uridine(54) in tRNA + (6R)-5,10-methylene-5,6,7,8-tetrahydrofolate + NADH + H(+) = 5-methyluridine(54) in tRNA + (6S)-5,6,7,8-tetrahydrofolate + NAD(+). The enzyme catalyses uridine(54) in tRNA + (6R)-5,10-methylene-5,6,7,8-tetrahydrofolate + NADPH + H(+) = 5-methyluridine(54) in tRNA + (6S)-5,6,7,8-tetrahydrofolate + NADP(+). In terms of biological role, catalyzes the folate-dependent formation of 5-methyl-uridine at position 54 (M-5-U54) in all tRNAs. In Rhodopseudomonas palustris (strain BisB5), this protein is Methylenetetrahydrofolate--tRNA-(uracil-5-)-methyltransferase TrmFO.